The following is a 151-amino-acid chain: UPF0178 protein ESA_02916 (151 aa).

This sequence belongs to the UPF0178 family.

This Cronobacter sakazakii (strain ATCC BAA-894) (Enterobacter sakazakii) protein is UPF0178 protein ESA_02916.